Reading from the N-terminus, the 346-residue chain is Blue-light-activated histidine kinase 2 (346 aa).

The 75-residue stretch at 8 to 82 (HDKEAWGRLP…KAIRNCEEVE (75 aa)) folds into the PAS domain. Cys-55 is modified (S-4a-FMN cysteine). The region spanning 79 to 133 (EEVEETIYNYRADGEGFWNHLLMGPLEDQDEKCRYFVGIQVDMGQSESPDRATEL) is the PAC domain. The Histidine kinase domain maps to 139 to 334 (EVQHRVKNHL…IVNIDIPLSQ (196 aa)). At His-142 the chain carries Phosphohistidine; by autocatalysis.

In terms of processing, FMN binds covalently to cysteine after exposure to blue light and this bond is spontaneously broken in the dark.

It catalyses the reaction ATP + protein L-histidine = ADP + protein N-phospho-L-histidine.. Photosensitive kinase that is involved in increased bacterial virulence upon exposure to light. The sequence is that of Blue-light-activated histidine kinase 2 from Erythrobacter litoralis (strain HTCC2594).